We begin with the raw amino-acid sequence, 292 residues long: MSAGDGLPPLREVVARHGLEPKKALGQNFLYDLNLTGRIARAAGPLAGVTVVEVGPGPGGLTRALLAEGAARVVAIERDPRALPALAEIAAHYPGRLEVVDADALAFDPRPLVGDAPARIVANLPYNVGTALLTGWLDGEAWPPWWDQAVLMFQREVAERIVAGPEERADYGRLGVLCGWRTEAEILFDVSPSAFVPPPKVTSSVVRLVPRAQPLPCRAGALEAVTRAAFGQRRKMLRQSLKALTPAAGDLLAAAGLSETARAEEIPVAGFVDLANRWDAHRKAGAPVGTPA.

S-adenosyl-L-methionine contacts are provided by asparagine 28, leucine 30, glycine 55, glutamate 77, aspartate 103, and asparagine 123.

It belongs to the class I-like SAM-binding methyltransferase superfamily. rRNA adenine N(6)-methyltransferase family. RsmA subfamily.

The protein localises to the cytoplasm. The enzyme catalyses adenosine(1518)/adenosine(1519) in 16S rRNA + 4 S-adenosyl-L-methionine = N(6)-dimethyladenosine(1518)/N(6)-dimethyladenosine(1519) in 16S rRNA + 4 S-adenosyl-L-homocysteine + 4 H(+). Specifically dimethylates two adjacent adenosines (A1518 and A1519) in the loop of a conserved hairpin near the 3'-end of 16S rRNA in the 30S particle. May play a critical role in biogenesis of 30S subunits. In Methylobacterium radiotolerans (strain ATCC 27329 / DSM 1819 / JCM 2831 / NBRC 15690 / NCIMB 10815 / 0-1), this protein is Ribosomal RNA small subunit methyltransferase A.